The chain runs to 341 residues: uncharacterized protein (341 aa).

58–82 is an NADP(+) binding site; sequence ITGGSSGIGAAAAKKIAEAGGTVVL. Ser-194 contacts substrate. Catalysis depends on Tyr-207, which acts as the Proton acceptor. Positions 309–329 are disordered; sequence DSSAAKGSESQTDTSELDKRS.

It belongs to the short-chain dehydrogenases/reductases (SDR) family.

This is an uncharacterized protein from Mycobacterium bovis (strain ATCC BAA-935 / AF2122/97).